Consider the following 435-residue polypeptide: 5'-deoxyadenosine deaminase (435 aa).

The Zn(2+) site is built by His64 and His66. Substrate-binding residues include Glu93 and His185. His212 serves as a coordination point for Zn(2+). Glu215 and Asp300 together coordinate substrate. Asp300 contacts Zn(2+).

Belongs to the metallo-dependent hydrolases superfamily. MTA/SAH deaminase family. Homotetramer. Zn(2+) is required as a cofactor.

It carries out the reaction 5'-deoxyadenosine + H2O + H(+) = 5'-deoxyinosine + NH4(+). It catalyses the reaction S-adenosyl-L-homocysteine + H2O + H(+) = S-inosyl-L-homocysteine + NH4(+). The enzyme catalyses S-methyl-5'-thioadenosine + H2O + H(+) = S-methyl-5'-thioinosine + NH4(+). The catalysed reaction is adenosine + H2O + H(+) = inosine + NH4(+). It functions in the pathway amino-acid biosynthesis; S-adenosyl-L-methionine biosynthesis. Functionally, catalyzes the deamination of three SAM-derived enzymatic products, namely 5'-deoxyadenosine, S-adenosyl-L-homocysteine, and 5'-methylthioadenosine, to produce the inosine analogs. Can also deaminate adenosine. The preferred substrate for this enzyme is 5'-deoxyadenosine, but all these substrates are efficiently deaminated. Likely functions in a S-adenosyl-L-methionine (SAM) recycling pathway from S-adenosyl-L-homocysteine (SAH) produced from SAM-dependent methylation reactions. May also be involved in the recycling of 5'-deoxyadenosine, whereupon the 5'-deoxyribose moiety of 5'-deoxyinosine is further metabolized to deoxyhexoses used for the biosynthesis of aromatic amino acids in methanogens. In Methanobrevibacter smithii (strain ATCC 35061 / DSM 861 / OCM 144 / PS), this protein is 5'-deoxyadenosine deaminase.